A 582-amino-acid polypeptide reads, in one-letter code: Aspartate--tRNA(Asp/Asn) ligase (582 aa).

Residue Glu-177 participates in L-aspartate binding. The interval 201–204 (QLFK) is aspartate. Arg-223 serves as a coordination point for L-aspartate. Residues 223–225 (RDE) and Gln-232 each bind ATP. Residue His-447 coordinates L-aspartate. Glu-481 is an ATP binding site. Arg-488 is an L-aspartate binding site. 533 to 536 (GLDR) lines the ATP pocket.

It belongs to the class-II aminoacyl-tRNA synthetase family. Type 1 subfamily. Homodimer.

It is found in the cytoplasm. It carries out the reaction tRNA(Asx) + L-aspartate + ATP = L-aspartyl-tRNA(Asx) + AMP + diphosphate. In terms of biological role, aspartyl-tRNA synthetase with relaxed tRNA specificity since it is able to aspartylate not only its cognate tRNA(Asp) but also tRNA(Asn). Reaction proceeds in two steps: L-aspartate is first activated by ATP to form Asp-AMP and then transferred to the acceptor end of tRNA(Asp/Asn). The sequence is that of Aspartate--tRNA(Asp/Asn) ligase from Chlamydia trachomatis serovar L2 (strain ATCC VR-902B / DSM 19102 / 434/Bu).